Here is a 983-residue protein sequence, read N- to C-terminus: Chaperone protein ClpB3, mitochondrial (983 aa).

The N-terminal 87 residues, 1-87 (MSRATAVSRL…LFHPTQAARY (87 aa)), are a transit peptide targeting the mitochondrion. The Clp R domain maps to 97–240 (PGEFTEMAWE…KEAISAVRGS (144 aa)). 2 repeat regions span residues 100 to 165 (FTEM…ISRQ) and 177 to 240 (IGSS…VRGS). Residues 255-503 (LEKYGIDMTE…KLKMEITSKP (249 aa)) form an i region. 300-307 (GEPGVGKT) is a binding site for ATP. A coiled-coil region spans residues 504 to 627 (IELDEVDREI…QQSGKSMLRE (124 aa)). Residues 629–820 (VTDVDIAEIV…VIIMTSNIGS (192 aa)) are II. 703–710 (GPTGVGKT) is a binding site for ATP.

The protein belongs to the ClpA/ClpB family.

Its subcellular location is the mitochondrion. Its function is as follows. Molecular chaperone that may not be involved in heat stress response or tolerance. This chain is Chaperone protein ClpB3, mitochondrial (CLPB3), found in Oryza sativa subsp. japonica (Rice).